Here is a 318-residue protein sequence, read N- to C-terminus: Transaldolase (318 aa).

Lysine 132 functions as the Schiff-base intermediate with substrate in the catalytic mechanism.

It belongs to the transaldolase family. Type 1 subfamily. In terms of assembly, homodimer.

Its subcellular location is the cytoplasm. It carries out the reaction D-sedoheptulose 7-phosphate + D-glyceraldehyde 3-phosphate = D-erythrose 4-phosphate + beta-D-fructose 6-phosphate. Its pathway is carbohydrate degradation; pentose phosphate pathway; D-glyceraldehyde 3-phosphate and beta-D-fructose 6-phosphate from D-ribose 5-phosphate and D-xylulose 5-phosphate (non-oxidative stage): step 2/3. In terms of biological role, transaldolase is important for the balance of metabolites in the pentose-phosphate pathway. This Allorhizobium ampelinum (strain ATCC BAA-846 / DSM 112012 / S4) (Agrobacterium vitis (strain S4)) protein is Transaldolase.